Consider the following 488-residue polypeptide: Inosine-5'-monophosphate dehydrogenase (488 aa).

CBS domains follow at residues 95 to 153 (VISN…SIKI) and 157 to 216 (MTKD…AKDE). NAD(+) is bound by residues Asp250 and 300–302 (GIG). The K(+) site is built by Gly302 and Gly304. Position 305 (Ser305) interacts with IMP. Cys307 contributes to the K(+) binding site. Cys307 serves as the catalytic Thioimidate intermediate. IMP-binding positions include 340 to 342 (DGG), 363 to 364 (GS), and 387 to 391 (YRGMG). Residue Arg403 is the Proton acceptor of the active site. Glu417 is an IMP binding site. The segment at 467-488 (AGLAESHPHNVQITKESPNYSF) is disordered. 3 residues coordinate K(+): Glu471, Ser472, and His473. Residues 475-488 (HNVQITKESPNYSF) show a composition bias toward polar residues.

This sequence belongs to the IMPDH/GMPR family. As to quaternary structure, homotetramer. The cofactor is K(+).

The enzyme catalyses IMP + NAD(+) + H2O = XMP + NADH + H(+). It participates in purine metabolism; XMP biosynthesis via de novo pathway; XMP from IMP: step 1/1. With respect to regulation, mycophenolic acid (MPA) is a non-competitive inhibitor that prevents formation of the closed enzyme conformation by binding to the same site as the amobile flap. In contrast, mizoribine monophosphate (MZP) is a competitive inhibitor that induces the closed conformation. MPA is a potent inhibitor of mammalian IMPDHs but a poor inhibitor of the bacterial enzymes. MZP is a more potent inhibitor of bacterial IMPDH. Functionally, catalyzes the conversion of inosine 5'-phosphate (IMP) to xanthosine 5'-phosphate (XMP), the first committed and rate-limiting step in the de novo synthesis of guanine nucleotides, and therefore plays an important role in the regulation of cell growth. In Staphylococcus epidermidis (strain ATCC 35984 / DSM 28319 / BCRC 17069 / CCUG 31568 / BM 3577 / RP62A), this protein is Inosine-5'-monophosphate dehydrogenase.